We begin with the raw amino-acid sequence, 186 residues long: Casparian strip membrane protein 5 (186 aa).

At 1-25 (MKTDAIELGVAKDSTPIGGANRGVS) the chain is on the cytoplasmic side. The helical transmembrane segment at 26-46 (ILDFILRLVALVGTLASAILM) threads the bilayer. Over 47 to 73 (GTTNETLPFATQFIRFRAEYDDLPTFT) the chain is Extracellular. Asn-50 carries an N-linked (GlcNAc...) asparagine glycan. A helical membrane pass occupies residues 74–94 (FFVVANIVVSGYLLLSLPLSI). At 95–106 (VNIVRSTAKNRR) the chain is on the cytoplasmic side. A helical transmembrane segment spans residues 107 to 127 (IILIIFDTAMLALLTAGASAA). The Extracellular portion of the chain corresponds to 128-156 (AAIVYLAHKGNTRANWFAICQQFNSFCER). The chain crosses the membrane as a helical span at residues 157–177 (ISGSLIGSFVGVAVFILLILM). Topologically, residues 178-186 (SASALSRRN) are cytoplasmic.

The protein belongs to the Casparian strip membrane proteins (CASP) family. As to quaternary structure, homodimer and heterodimers.

The protein localises to the cell membrane. Functionally, regulates membrane-cell wall junctions and localized cell wall deposition. Required for establishment of the Casparian strip membrane domain (CSD) and the subsequent formation of Casparian strips, a cell wall modification of the root endodermis that determines an apoplastic barrier between the intraorganismal apoplasm and the extraorganismal apoplasm and prevents lateral diffusion. The sequence is that of Casparian strip membrane protein 5 from Ricinus communis (Castor bean).